Reading from the N-terminus, the 431-residue chain is Dihydroorotase (431 aa).

His-55 and His-57 together coordinate Zn(2+). Residues 57–59 and Asn-89 contribute to the substrate site; that span reads HFR. Zn(2+)-binding residues include Lys-139, His-169, His-223, and Asp-290. Lys-139 carries the N6-carboxylysine modification. The active site involves Asp-290. Substrate contacts are provided by residues His-294 and 308–309; that span reads PG.

The protein belongs to the metallo-dependent hydrolases superfamily. DHOase family. Class I DHOase subfamily. Zn(2+) is required as a cofactor.

The enzyme catalyses (S)-dihydroorotate + H2O = N-carbamoyl-L-aspartate + H(+). The protein operates within pyrimidine metabolism; UMP biosynthesis via de novo pathway; (S)-dihydroorotate from bicarbonate: step 3/3. Functionally, catalyzes the reversible cyclization of carbamoyl aspartate to dihydroorotate. The polypeptide is Dihydroorotase (Methanothermobacter thermautotrophicus (strain ATCC 29096 / DSM 1053 / JCM 10044 / NBRC 100330 / Delta H) (Methanobacterium thermoautotrophicum)).